We begin with the raw amino-acid sequence, 316 residues long: Ninja-family protein 2 (316 aa).

Disordered stretches follow at residues 1–29 and 72–236; these read MASRDFLGRFGGEKGSSSDKAGGGAGEPD and TSDD…TSTG. The span at 99–108 shows a compositional bias: basic and acidic residues; it reads ERWRRREMQS. Residues 156 to 166 are compositionally biased toward polar residues; that stretch reads DQGNTSSSMPE. Low complexity-rich tracts occupy residues 179 to 199 and 222 to 235; these read SSMEISSDNNNNNNASNQNKS and LRTLRSLTMRTTST.

The protein belongs to the Ninja family.

The protein resides in the nucleus. This chain is Ninja-family protein 2 (AFP-B1), found in Triticum aestivum (Wheat).